Here is a 464-residue protein sequence, read N- to C-terminus: Arginine biosynthesis bifunctional protein ArgJ, chloroplastic (464 aa).

The substrate site is built by Thr-208, Lys-234, Thr-245, Glu-332, Asn-459, and Thr-464. The active-site Nucleophile is Thr-245.

The protein belongs to the ArgJ family. As to quaternary structure, heterodimer of an alpha and a beta chain.

The protein localises to the plastid. It is found in the chloroplast. It carries out the reaction N(2)-acetyl-L-ornithine + L-glutamate = N-acetyl-L-glutamate + L-ornithine. It catalyses the reaction L-glutamate + acetyl-CoA = N-acetyl-L-glutamate + CoA + H(+). Its pathway is amino-acid biosynthesis; L-arginine biosynthesis; L-ornithine and N-acetyl-L-glutamate from L-glutamate and N(2)-acetyl-L-ornithine (cyclic): step 1/1. It functions in the pathway amino-acid biosynthesis; L-arginine biosynthesis; N(2)-acetyl-L-ornithine from L-glutamate: step 1/4. Its function is as follows. Catalyzes two activities which are involved in the cyclic version of arginine biosynthesis: the synthesis of acetylglutamate from glutamate and acetyl-CoA, and of ornithine by transacetylation between acetylornithine and glutamate. The chain is Arginine biosynthesis bifunctional protein ArgJ, chloroplastic from Sorghum bicolor (Sorghum).